We begin with the raw amino-acid sequence, 156 residues long: Aspartate 1-decarboxylase (156 aa).

Catalysis depends on Ser29, which acts as the Schiff-base intermediate with substrate; via pyruvic acid. Ser29 carries the post-translational modification Pyruvic acid (Ser). Thr61 lines the substrate pocket. The active-site Proton donor is Tyr62. Residue 77-79 (GAA) coordinates substrate.

This sequence belongs to the PanD family. In terms of assembly, heterooctamer of four alpha and four beta subunits. Requires pyruvate as cofactor. Post-translationally, is synthesized initially as an inactive proenzyme, which is activated by self-cleavage at a specific serine bond to produce a beta-subunit with a hydroxyl group at its C-terminus and an alpha-subunit with a pyruvoyl group at its N-terminus.

Its subcellular location is the cytoplasm. It catalyses the reaction L-aspartate + H(+) = beta-alanine + CO2. It functions in the pathway cofactor biosynthesis; (R)-pantothenate biosynthesis; beta-alanine from L-aspartate: step 1/1. In terms of biological role, catalyzes the pyruvoyl-dependent decarboxylation of aspartate to produce beta-alanine. The chain is Aspartate 1-decarboxylase from Rhodopirellula baltica (strain DSM 10527 / NCIMB 13988 / SH1).